A 305-amino-acid chain; its full sequence is N-acyl-aromatic-L-amino acid amidohydrolase (carboxylate-forming) (305 aa).

Residues histidine 15 and glutamate 18 each contribute to the Zn(2+) site. Residues arginine 57 and 64–65 (NR) contribute to the substrate site. Histidine 108 is a Zn(2+) binding site. Residues glutamate 171 and tyrosine 281 each contribute to the substrate site.

It belongs to the AspA/AstE family. Aspartoacylase subfamily. Homotetramer. Requires Zn(2+) as cofactor.

It is found in the apical cell membrane. Its subcellular location is the cytoplasm. The catalysed reaction is an N-acyl-aromatic L-alpha-amino acid + H2O = an aromatic L-alpha-amino acid + a carboxylate. It carries out the reaction an N-acetyl-L-cysteine-S-conjugate + H2O = an S-substituted L-cysteine + acetate. Its function is as follows. Plays an important role in deacetylating mercapturic acids in kidney proximal tubules. This is N-acyl-aromatic-L-amino acid amidohydrolase (carboxylate-forming) (acy3) from Xenopus laevis (African clawed frog).